The following is a 406-amino-acid chain: MPKRKAAGDVSQEPKRRSARLSAMPVPFTPELKPKRASTSRKTKTTNVVEENKDASTIPIPETKPEDVKDECNMENAENGEAKIMEAPIPKMEAEEVKEQINEDTEEDGGEKKEAVAAEAKDDELKANIQDVEKDEDGKEHKDTGEEVEDGKIEEEGLNEKPGTAKSEDAEVSKDEEEKGDNEKGEDGKEEGDEKEEEKDDKEGDTGTEKEVKEQNKEAEEDDGKCKEEENKEVGKEGQPEEDGKEDLHEEVGKEDLHEEDGKEGQPEEDGKEIHHEEDGKEGQPEEDGKEYLHEEDGEEGQPKEDQKEGQPEEDGKEDQPEEDGKEGQCKEDGKEGHHEEGGKEDLHEEDGKEKDGGKEDRKEEGEQEVAVDEGSDENKVEAEEEGAENKDFKQDGEKEEPLSIV.

The tract at residues 1-406 (MPKRKAAGDV…GEKEEPLSIV (406 aa)) is disordered. Thr-29 is modified (phosphothreonine). Positions 35–44 (KRASTSRKTK) are enriched in basic residues. Basic and acidic residues-rich tracts occupy residues 63-72 (TKPEDVKDEC), 92-101 (MEAEEVKEQI), 110-126 (GEKKEAVAAEAKDDELK), 136-159 (EDGKEHKDTGEEVEDGKIEEEGLN), and 166-187 (KSEDAEVSKDEEEKGDNEKGED). A Glycyl lysine isopeptide (Lys-Gly) (interchain with G-Cter in SUMO2) cross-link involves residue Lys-64. Lys-98 is covalently cross-linked (Glycyl lysine isopeptide (Lys-Gly) (interchain with G-Cter in SUMO1); alternate). A Glycyl lysine isopeptide (Lys-Gly) (interchain with G-Cter in SUMO2); alternate cross-link involves residue Lys-98. Residue Lys-121 forms a Glycyl lysine isopeptide (Lys-Gly) (interchain with G-Cter in SUMO2) linkage. A compositionally biased stretch (acidic residues) spans 188-200 (GKEEGDEKEEEKD). Basic and acidic residues-rich tracts occupy residues 201–239 (DKEGDTGTEKEVKEQNKEAEEDDGKCKEEENKEVGKEGQ), 246–266 (EDLHEEVGKEDLHEEDGKEGQ), 272–284 (KEIHHEEDGKEGQ), and 290–311 (KEYLHEEDGEEGQPKEDQKEGQ). The span at 312 to 325 (PEEDGKEDQPEEDG) shows a compositional bias: acidic residues. Basic and acidic residues predominate over residues 326 to 365 (KEGQCKEDGKEGHHEEGGKEDLHEEDGKEKDGGKEDRKEE). Residues 366-376 (GEQEVAVDEGS) show a composition bias toward acidic residues. Residues 377–406 (DENKVEAEEEGAENKDFKQDGEKEEPLSIV) are compositionally biased toward basic and acidic residues.

It belongs to the HMGN family. Expressed in liver, spleen, lung, heart, kidney, muscle and brain (at protein level). Widely expressed with highest levels in submaxillary gland, thymus, kidney and liver and lowest levels in brain, lung, pancreas and eye.

The protein localises to the nucleus. Functionally, preferentially binds to euchromatin and modulates cellular transcription by counteracting linker histone-mediated chromatin compaction. The chain is High mobility group nucleosome-binding domain-containing protein 5 (Hmgn5) from Mus musculus (Mouse).